Reading from the N-terminus, the 62-residue chain is UPF0434 protein Fphi_1862 (62 aa).

Belongs to the UPF0434 family.

The protein is UPF0434 protein Fphi_1862 of Francisella philomiragia subsp. philomiragia (strain ATCC 25017 / CCUG 19701 / FSC 153 / O#319-036).